Reading from the N-terminus, the 133-residue chain is Ribosome-binding factor A (133 aa).

The protein belongs to the RbfA family. In terms of assembly, monomer. Binds 30S ribosomal subunits, but not 50S ribosomal subunits or 70S ribosomes.

Its subcellular location is the cytoplasm. One of several proteins that assist in the late maturation steps of the functional core of the 30S ribosomal subunit. Associates with free 30S ribosomal subunits (but not with 30S subunits that are part of 70S ribosomes or polysomes). Required for efficient processing of 16S rRNA. May interact with the 5'-terminal helix region of 16S rRNA. This chain is Ribosome-binding factor A, found in Shigella boydii serotype 18 (strain CDC 3083-94 / BS512).